We begin with the raw amino-acid sequence, 104 residues long: Large ribosomal subunit protein eL36 (104 aa).

This sequence belongs to the eukaryotic ribosomal protein eL36 family.

This Tetrahymena thermophila (strain SB210) protein is Large ribosomal subunit protein eL36 (RPL36).